A 359-amino-acid polypeptide reads, in one-letter code: 3-dehydroquinate synthase (359 aa).

NAD(+)-binding positions include 106-110 (GVVGD), 130-131 (TT), Lys143, Lys152, and 170-173 (TLQT). Zn(2+) contacts are provided by Glu185, His248, and His265.

The protein belongs to the sugar phosphate cyclases superfamily. Dehydroquinate synthase family. Co(2+) is required as a cofactor. The cofactor is Zn(2+). Requires NAD(+) as cofactor.

The protein localises to the cytoplasm. It catalyses the reaction 7-phospho-2-dehydro-3-deoxy-D-arabino-heptonate = 3-dehydroquinate + phosphate. It functions in the pathway metabolic intermediate biosynthesis; chorismate biosynthesis; chorismate from D-erythrose 4-phosphate and phosphoenolpyruvate: step 2/7. In terms of biological role, catalyzes the conversion of 3-deoxy-D-arabino-heptulosonate 7-phosphate (DAHP) to dehydroquinate (DHQ). The protein is 3-dehydroquinate synthase of Desulforamulus reducens (strain ATCC BAA-1160 / DSM 100696 / MI-1) (Desulfotomaculum reducens).